A 225-amino-acid chain; its full sequence is 3-dehydroquinate dehydratase (225 aa).

3-dehydroquinate contacts are provided by residues serine 6, 30 to 32, and arginine 62; that span reads EWR. The active-site Proton donor/acceptor is histidine 118. Residue lysine 143 is the Schiff-base intermediate with substrate of the active site. 3 residues coordinate 3-dehydroquinate: arginine 186, serine 205, and glutamine 209.

Belongs to the type-I 3-dehydroquinase family. Homodimer.

It carries out the reaction 3-dehydroquinate = 3-dehydroshikimate + H2O. The protein operates within metabolic intermediate biosynthesis; chorismate biosynthesis; chorismate from D-erythrose 4-phosphate and phosphoenolpyruvate: step 3/7. Its function is as follows. Involved in the third step of the chorismate pathway, which leads to the biosynthesis of aromatic amino acids. Catalyzes the cis-dehydration of 3-dehydroquinate (DHQ) and introduces the first double bond of the aromatic ring to yield 3-dehydroshikimate. This Streptococcus pneumoniae (strain P1031) protein is 3-dehydroquinate dehydratase.